The primary structure comprises 116 residues: Ribosome-binding factor A (116 aa).

Belongs to the RbfA family. In terms of assembly, monomer. Binds 30S ribosomal subunits, but not 50S ribosomal subunits or 70S ribosomes.

The protein resides in the cytoplasm. One of several proteins that assist in the late maturation steps of the functional core of the 30S ribosomal subunit. Associates with free 30S ribosomal subunits (but not with 30S subunits that are part of 70S ribosomes or polysomes). Required for efficient processing of 16S rRNA. May interact with the 5'-terminal helix region of 16S rRNA. The protein is Ribosome-binding factor A of Streptococcus uberis (strain ATCC BAA-854 / 0140J).